Reading from the N-terminus, the 46-residue chain is Photosystem II reaction center protein K (46 aa).

A propeptide spanning residues 1–9 (MLILLNTFA) is cleaved from the precursor. Residues 25–45 (LPLIPLFFFLLVFVWQAAVGF) form a helical membrane-spanning segment.

This sequence belongs to the PsbK family. In terms of assembly, PSII is composed of 1 copy each of membrane proteins PsbA, PsbB, PsbC, PsbD, PsbE, PsbF, PsbH, PsbI, PsbJ, PsbK, PsbL, PsbM, PsbT, PsbX, PsbY, Psb30/Ycf12, peripheral proteins PsbO, CyanoQ (PsbQ), PsbU, PsbV and a large number of cofactors. It forms dimeric complexes.

It is found in the cellular thylakoid membrane. Functionally, one of the components of the core complex of photosystem II (PSII). PSII is a light-driven water:plastoquinone oxidoreductase that uses light energy to abstract electrons from H(2)O, generating O(2) and a proton gradient subsequently used for ATP formation. It consists of a core antenna complex that captures photons, and an electron transfer chain that converts photonic excitation into a charge separation. This Prochlorococcus marinus (strain MIT 9215) protein is Photosystem II reaction center protein K.